The primary structure comprises 167 residues: Pathogenesis-related protein PRMS (167 aa).

The first 27 residues, 1-27 (MEASNKLAVLLLWLVMAAATAVHPSYS), serve as a signal peptide directing secretion. Residues 37-155 (PQNSARAAVG…NRGVFIICNY (119 aa)) form the SCP domain. 3 cysteine pairs are disulfide-bonded: Cys-71–Cys-143, Cys-116–Cys-122, and Cys-138–Cys-153.

It belongs to the CRISP family.

Probably involved in the defense reaction of plants against pathogens. The polypeptide is Pathogenesis-related protein PRMS (PRMS) (Zea mays (Maize)).